A 354-amino-acid polypeptide reads, in one-letter code: Opsin-5 (354 aa).

At 1–33 (MALNHTALPQDERLPHYLRDGDPFASKLSWEAD) the chain is on the extracellular side. Residue Asn-4 is glycosylated (N-linked (GlcNAc...) asparagine). Residues 34–54 (LVAGFYLTIIGILSTFGNGYV) form a helical membrane-spanning segment. Residues 55 to 74 (LYMSSRRKKKLRPAEIMTIN) are Cytoplasmic-facing. Residues 75 to 95 (LAVCDLGISVVGKPFTIISCF) traverse the membrane as a helical segment. Over 96–108 (CHRWVFGWIGCRW) the chain is Extracellular. Cys-106 and Cys-183 are joined by a disulfide. The helical transmembrane segment at 109-129 (YGWAGFFFGCGSLITMTAVSL) threads the bilayer. Residues 130 to 150 (DRYLKICYLSYGVWLKRKHAY) are Cytoplasmic-facing. The helical transmembrane segment at 151–171 (ICLAAIWAYASFWTTMPLVGL) threads the bilayer. Topologically, residues 172-197 (GDYVPEPFGTSCTLDWWLAQASVGGQ) are extracellular. A helical transmembrane segment spans residues 198–218 (VFILNILFFCLLLPTAVIVFS). Over 219–252 (YVKIIAKVKSSSKEVAHFDSRIHSSHVLEMKLTK) the chain is Cytoplasmic. Residues 253 to 273 (VAMLICAGFLIAWIPYAVVSV) traverse the membrane as a helical segment. The Extracellular portion of the chain corresponds to 274 to 288 (WSAFGRPDSIPIQLS). The chain crosses the membrane as a helical span at residues 289–309 (VVPTLLAKSAAMYNPIIYQVI). Lys-296 carries the N6-(retinylidene)lysine modification. The Cytoplasmic portion of the chain corresponds to 310-353 (DYKFACCQTGGLKATKKKSLEGFRLHTVTTVRKSSAVLEIHEEW). S-palmitoyl cysteine attachment occurs at residues Cys-315 and Cys-316.

The protein belongs to the G-protein coupled receptor 1 family. Opsin subfamily. In terms of processing, it is uncertain whether Cys-315 or Cys-316 is palmitoylated. Detected in brain and retina and cell lines derived from neural retina.

It is found in the cell membrane. In terms of biological role, G-protein coupled receptor which selectively activates G(i) type G proteins via ultraviolet A (UVA) light-mediated activation in the retina. Preferentially binds the chromophore 11-cis retinal and is a bistable protein that displays emission peaks at 380 nm (UVA light) and 470 nm (blue light). Required for the light-response in the inner plexiform layer, and contributes to the regulation of the light-response in the nerve fiber layer, via phosphorylated DAT/SLC6A3 dopamine uptake. Involved in local corneal and retinal circadian rhythm photoentrainment via modulation of the UVA light-induced phase-shift of the retina clock. Acts as a circadian photoreceptor in the outer ear, via modulation of circadian clock-gene expression in response to violet light during the light-to-dark transition phase and night phase of the circadian cycle. Required in the retina to negatively regulate hyaloid vessel regression during postnatal development via light-dependent OPN5-SLC32A1-DRD2-VEGFR2 signaling. Involved in the light-dependent regulation of retina and vitreous compartment dopamine levels. This Homo sapiens (Human) protein is Opsin-5 (OPN5).